A 217-amino-acid polypeptide reads, in one-letter code: Histone H1-gamma, late (217 aa).

2 disordered regions span residues 1-21 (MSAA…HPPS) and 80-217 (GKGA…PAKK). The 75-residue stretch at 17–91 (AHPPSSQMVV…GASGSFKLGK (75 aa)) folds into the H15 domain. Positions 104–113 (IAAKKAKLAA) are enriched in basic residues. Residues 114-123 (KKKEQREKKA) are compositionally biased toward basic and acidic residues. The segment covering 124–217 (LKTKARKEKV…AKKAAKPAKK (94 aa)) has biased composition (basic residues).

This sequence belongs to the histone H1/H5 family.

The protein localises to the nucleus. It is found in the chromosome. In terms of biological role, histones H1 are necessary for the condensation of nucleosome chains into higher-order structures. The protein is Histone H1-gamma, late of Strongylocentrotus purpuratus (Purple sea urchin).